The following is a 109-amino-acid chain: MDMDLNNRLTEDETLEQAYDIFLELAADNLDPADIILFNLQFEERGGAELFDPSADWEEHVDYDLNPDFFAEVVIGLADTDGGEINDIFARVLLCREKDHKLCHILWRE.

It belongs to the putative dsDNA mimic protein family.

Its function is as follows. May act as a double-stranded DNA (dsDNA) mimic. Probably regulates the activity of a dsDNA-binding protein. This is Putative double-stranded DNA mimic protein KPK_2119 from Klebsiella pneumoniae (strain 342).